The chain runs to 151 residues: 3-dehydroquinate dehydratase (151 aa).

The active-site Proton acceptor is the tyrosine 24. Substrate-binding residues include asparagine 76, histidine 82, and aspartate 89. Catalysis depends on histidine 102, which acts as the Proton donor. Substrate is bound by residues 103–104 and arginine 113; that span reads LS.

This sequence belongs to the type-II 3-dehydroquinase family. In terms of assembly, homododecamer.

The enzyme catalyses 3-dehydroquinate = 3-dehydroshikimate + H2O. The protein operates within metabolic intermediate biosynthesis; chorismate biosynthesis; chorismate from D-erythrose 4-phosphate and phosphoenolpyruvate: step 3/7. Its function is as follows. Catalyzes a trans-dehydration via an enolate intermediate. This Acinetobacter baumannii (strain AB307-0294) protein is 3-dehydroquinate dehydratase.